The following is a 452-amino-acid chain: Exoglucanase 1 (452 aa).

Positions 1 to 18 (MFSKFALTGSLLAGAVNA) are cleaved as a signal peptide. N75 carries N-linked (GlcNAc...) asparagine glycosylation. E230 serves as the catalytic Nucleophile. The active-site Proton donor is E235. 2 N-linked (GlcNAc...) asparagine glycosylation sites follow: N335 and N360.

The protein belongs to the glycosyl hydrolase 7 (cellulase C) family.

It catalyses the reaction Hydrolysis of (1-&gt;4)-beta-D-glucosidic linkages in cellulose and cellotetraose, releasing cellobiose from the non-reducing ends of the chains.. Functionally, the biological conversion of cellulose to glucose generally requires three types of hydrolytic enzymes: (1) Endoglucanases which cut internal beta-1,4-glucosidic bonds; (2) Exocellobiohydrolases that cut the disaccharide cellobiose from the non-reducing end of the cellulose polymer chain; (3) Beta-1,4-glucosidases which hydrolyze the cellobiose and other short cello-oligosaccharides to glucose. This chain is Exoglucanase 1 (CBH-1), found in Cryphonectria parasitica (Chestnut blight fungus).